Consider the following 343-residue polypeptide: Heat-inducible transcription repressor HrcA (343 aa).

It belongs to the HrcA family.

In terms of biological role, negative regulator of class I heat shock genes (grpE-dnaK-dnaJ and groELS operons). Prevents heat-shock induction of these operons. The sequence is that of Heat-inducible transcription repressor HrcA from Mycolicibacterium smegmatis (strain ATCC 700084 / mc(2)155) (Mycobacterium smegmatis).